A 396-amino-acid chain; its full sequence is Calcium-binding and spermatid-specific protein 1 (396 aa).

Residues 1–21 are disordered; sequence MAEDGLPKIYSHPPTESSKTP. Ser274 bears the Phosphoserine mark. The tract at residues 276–296 is disordered; the sequence is EKDKDNQEDTLLTDEESPEGA. Positions 283-293 are enriched in acidic residues; sequence EDTLLTDEESP. Residue Thr288 is modified to Phosphothreonine; by CK2. Phosphoserine occurs at positions 320 and 377. The tract at residues 336-396 is disordered; sequence EDSSTEEELS…LKEEPDEFMI (61 aa).

The protein resides in the cytoplasm. Its subcellular location is the mitochondrion inner membrane. It is found in the cell projection. The protein localises to the cilium. It localises to the flagellum. The protein resides in the cytoplasmic vesicle. Its subcellular location is the secretory vesicle. It is found in the acrosome. In terms of biological role, calcium-binding protein. Essential for maintaining the structural integrity of the sperm flagella. The sequence is that of Calcium-binding and spermatid-specific protein 1 (CABS1) from Macaca fascicularis (Crab-eating macaque).